Here is a 162-residue protein sequence, read N- to C-terminus: Shikimate kinase (162 aa).

An ATP-binding site is contributed by 10 to 15 (GAGKST). Position 14 (Ser-14) interacts with Mg(2+). Substrate contacts are provided by Asp-28, Arg-52, and Gly-73. Arg-113 lines the ATP pocket. Arg-129 serves as a coordination point for substrate.

The protein belongs to the shikimate kinase family. Monomer. Mg(2+) serves as cofactor.

The protein localises to the cytoplasm. The enzyme catalyses shikimate + ATP = 3-phosphoshikimate + ADP + H(+). It functions in the pathway metabolic intermediate biosynthesis; chorismate biosynthesis; chorismate from D-erythrose 4-phosphate and phosphoenolpyruvate: step 5/7. Catalyzes the specific phosphorylation of the 3-hydroxyl group of shikimic acid using ATP as a cosubstrate. The sequence is that of Shikimate kinase from Lactococcus lactis subsp. cremoris (strain SK11).